Consider the following 574-residue polypeptide: Streptolysin O (574 aa).

An N-terminal signal peptide occupies residues 1-36 (MKDMSNKKIFKKYSRVAGLLTAALIVGNLVTANADS). The span at 37-52 (NKQNTANTETTTTNEQ) shows a compositional bias: low complexity. Disordered stretches follow at residues 37–64 (NKQNTANTETTTTNEQPKPESSELTTEK) and 84–111 (KEMPLESAEKEEKKSEDNKKSEEDHTEE). Positions 53–64 (PKPESSELTTEK) are enriched in basic and acidic residues. Transmembrane regions (beta stranded) follow at residues 263-276 (KSQIEAALNVNSKI), 283-292 (IDFKSISKGE), 361-370 (SNDVEAAFSA), and 378-390 (KTNGKYSDILENS). The Conserved undecapeptide signature appears at 532 to 542 (ECTGLAWEWWR). Residues 564-565 (TL) carry the Cholesterol binding motif.

This sequence belongs to the cholesterol-dependent cytolysin family. As to quaternary structure, homooligomeric pore complex of 35 to 50 subunits; when inserted in the host membrane.

It localises to the secreted. The protein resides in the host cell membrane. A cholesterol-dependent toxin that causes cytolysis by forming pores in cholesterol containing host membranes. After binding to target membranes, the protein undergoes a major conformation change, leading to its insertion in the host membrane and formation of an oligomeric pore complex. Cholesterol is required for binding to host membranes, membrane insertion and pore formation; cholesterol binding is mediated by a Thr-Leu pair in the C-terminus. Can be reversibly inactivated by oxidation. The sequence is that of Streptolysin O (slo) from Streptococcus canis.